Consider the following 888-residue polypeptide: Tyrosine-protein kinase receptor UFO (888 aa).

A signal peptide spans Met1–Ala18. Residues Ala19 to Trp86 form an interaction with GAS6 region. Residues Ala19–Trp445 lie on the Extracellular side of the membrane. Ig-like C2-type domains lie at Pro30–Ser122 and Pro133–Thr216. Residue Asn37 is glycosylated (N-linked (GlcNAc...) asparagine). A disulfide bond links Cys50 and Cys111. Asn151 and Asn192 each carry an N-linked (GlcNAc...) asparagine glycan. Residues Cys154 and Cys199 are joined by a disulfide bond. Fibronectin type-III domains lie at Arg221–Gly325 and Pro330–Pro422. 3 N-linked (GlcNAc...) asparagine glycosylation sites follow: Asn333, Asn339, and Asn395. A helical membrane pass occupies residues Tyr446 to Val466. Topologically, residues His467–Ala888 are cytoplasmic. In terms of domain architecture, Protein kinase spans Val530–Leu801. ATP is bound by residues Leu536–Val544 and Lys561. The Proton acceptor role is filled by Asp666. Tyr697, Tyr773, and Tyr815 each carry phosphotyrosine; by autocatalysis. The disordered stretch occupies residues Glu820 to Cys846. Tyr860 is modified (phosphotyrosine; by autocatalysis). A disordered region spans residues Ser865 to Ala888.

The protein belongs to the protein kinase superfamily. Tyr protein kinase family. AXL/UFO subfamily. As to quaternary structure, heterodimer and heterotetramer with ligand GAS6. Interacts with CBL, GRB2, LCK, NCK2, PIK3R1, PIK3R2, PIK3R3, PLCG1, SOCS1 and TNS2. Part of a complex including AXL, TNK2 and GRB2, in which GRB2 promotes AXL recruitment by TNK2. In terms of processing, monoubiquitinated upon GAS6-binding. A very small proportion of the receptor could be subjected to polyubiquitination in a very transient fashion. Post-translationally, phosphorylated at tyrosine residues by autocatalysis, which activates kinase activity. In distinct substructures of a broad spectrum of developing tissues (in the late embryogenesis). In cells forming organ capsules as well as in connective tissue structures (in adult).

It is found in the cell membrane. It carries out the reaction L-tyrosyl-[protein] + ATP = O-phospho-L-tyrosyl-[protein] + ADP + H(+). Its activity is regulated as follows. Activated by GAS6-binding and subsequent autophosphorylation. Its function is as follows. Receptor tyrosine kinase that transduces signals from the extracellular matrix into the cytoplasm by binding growth factor GAS6 and which is thus regulating many physiological processes including cell survival, cell proliferation, migration and differentiation. Ligand binding at the cell surface induces dimerization and autophosphorylation of AXL. Following activation by ligand, AXL binds and induces tyrosine phosphorylation of PI3-kinase subunits PIK3R1, PIK3R2 and PIK3R3; but also GRB2, PLCG1, LCK and PTPN11. Other downstream substrate candidates for AXL are CBL, NCK2, SOCS1 and TNS2. Recruitment of GRB2 and phosphatidylinositol 3 kinase regulatory subunits by AXL leads to the downstream activation of the AKT kinase. GAS6/AXL signaling plays a role in various processes such as endothelial cell survival during acidification by preventing apoptosis, optimal cytokine signaling during human natural killer cell development, hepatic regeneration, gonadotropin-releasing hormone neuron survival and migration, platelet activation, or regulation of thrombotic responses. Also plays an important role in inhibition of Toll-like receptors (TLRs)-mediated innate immune response. This is Tyrosine-protein kinase receptor UFO (Axl) from Mus musculus (Mouse).